The sequence spans 156 residues: Small ribosomal subunit protein uS7 (156 aa).

It belongs to the universal ribosomal protein uS7 family. As to quaternary structure, part of the 30S ribosomal subunit. Contacts proteins S9 and S11.

Its function is as follows. One of the primary rRNA binding proteins, it binds directly to 16S rRNA where it nucleates assembly of the head domain of the 30S subunit. Is located at the subunit interface close to the decoding center, probably blocks exit of the E-site tRNA. In Frankia casuarinae (strain DSM 45818 / CECT 9043 / HFP020203 / CcI3), this protein is Small ribosomal subunit protein uS7.